Here is a 305-residue protein sequence, read N- to C-terminus: MDGKALTASSLFDITGRVAVITGGGTGLGLMMAKALEANGAKVYILGRRLEPLQEAAKQSTHGNIHPVQCSVTSHADLQGVVDHIAAKDGYINLLVNNAGISTPNLGPHATRPTPKWDISKVRDYWFHKSFADYAAVFETNTTASLMVTFAFLELLDKGNKKSEEEAKASQARNGAGKARIEYVRSQVVTLSSVGGFGRDNSAFIYGASKAAATHMMKNLATYLAPWKIRVNVIAPGYFNTDMMGNFYKATGGRLPASLAPEERFGDAQEIGGTIVYLASKAGAYCNGMVLLVDGGYVSNKPSSY.

NADP(+)-binding residues include Leu-28 and Asn-98. Residue Ser-192 is the Proton donor of the active site. The NADP(+) site is built by Tyr-206, Lys-210, and Thr-241. Tyr-206 acts as the Proton acceptor in catalysis. Lys-210 serves as the catalytic Lowers pKa of active site Tyr.

Belongs to the short-chain dehydrogenases/reductases (SDR) family.

It catalyses the reaction methyl 2-[(3S)-9,10-dihydroxy-7-methoxy-1-oxo-1H,3H,4H-naphtho[2,3-c]pyran-3-yl]acetate + AH2 = semiviriditoxin + A. The catalysed reaction is 9,10-dihydroxy-7-methoxy-3-(2-oxopropyl)-1H-benzo[g]isochromen-1-one + AH2 = (3S)-9,10-dihydroxy-7-methoxy-3-(2-oxopropyl)-1H,3H,4H-naphtho[2,3-c]pyran-1-one + A. It participates in secondary metabolite biosynthesis. Its function is as follows. Short-chain dehydrogenase/reductase; part of the gene cluster that mediates the biosynthesis of viriditoxin, one of the 'classical' secondary metabolites produced by fungi and that has antibacterial activity. The first step is performed by the polyketide synthase VdtA which condenses one acetyl-CoA and 6 malonyl-CoA units to form the heptaketide monomer backbone of viriditoxin. The product of VdtA is then O-methylated on C7 by the O-methyltransferase VdtC. The O-methyl group is important for the stereoselective coupling of the monomers at the final step of viriditoxin biosynthesis. The short-chain dehydrogenase/reductase VdtF then acts as a stereospecific reductase converting the pyrone to dihydropyrone via the reduction of the C3-C4 double bond. The FAD-binding monooxygenase VdtE then converts the ketone group into a methyl-ester group to yield semi-viriditoxin. Finally, the laccase VdtB is involved in dimerization of 2 semi-viriditoxin molecules to yield the final viriditoxin. VdtB is responsible for the regioselective 6,6'-coupling of semi-viriditoxin, which yields (M)-viriditoxin and (P)-viriditoxin at a ratio of 1:2. The non-catalytic carboxylesterase-like protein VdtD affects the stereochemistical outcome of the coupling. The highly reducing polyketide synthase VdtX is not involved in viriditoxin synthesis, but might possibly play a role in the production of additional metabolites not identified yet. The protein is Short-chain dehydrogenase/reductase VdtF of Byssochlamys spectabilis (Paecilomyces variotii).